Consider the following 122-residue polypeptide: ATP synthase epsilon chain (122 aa).

The protein belongs to the ATPase epsilon chain family. F-type ATPases have 2 components, CF(1) - the catalytic core - and CF(0) - the membrane proton channel. CF(1) has five subunits: alpha(3), beta(3), gamma(1), delta(1), epsilon(1). CF(0) has three main subunits: a, b and c.

The protein resides in the cell membrane. In terms of biological role, produces ATP from ADP in the presence of a proton gradient across the membrane. The sequence is that of ATP synthase epsilon chain from Rhodococcus jostii (strain RHA1).